The sequence spans 268 residues: Transcription initiation factor TFIID subunit 14b (268 aa).

A compositionally biased stretch (polar residues) spans 1–20 (MTNSSSSKKQAQDQPETSEP). Residues 1–36 (MTNSSSSKKQAQDQPETSEPTLKSLKTKMTKSDEKQ) form a disordered region. A YEATS domain is found at 38 to 182 (KLKDIEISVP…ESFLARVQNH (145 aa)). A coiled-coil region spans residues 229–263 (DELLQLAAARQQVQAHIAKLRRQISLLEGQNQTVK).

This sequence belongs to the YAF9 family. In terms of assembly, component of the TFIID complex. TFIID is composed of TATA binding protein (TBP) and a number of TBP-associated factors (TAFs) whose MWs range from 14-217 kDa. Interacts with TAF1, TAF4B and TAF12B. Component of the SWR1 chromatin-remodeling complex. Interacts with FLX, a component of the transcription activator complex FRI-C. Interacts with SWC4, and with EAF1A and EAF1B (via HSA domain). In terms of tissue distribution, expressed in roots, leaves, inflorescence and flowering tissues.

The protein localises to the cytoplasm. It localises to the nucleus. Its function is as follows. Negative regulator of flowering controlling the H4K5 acetylation levels in the FLC and FT chromatin. Positively regulates FLC expression. Component of the transcription factor IID (TFIID) complex that is essential for mediating regulation of RNA polymerase transcription. Component of the SWR1 complex which mediates the ATP-dependent exchange of histone H2A for the H2A variant HZT1 leading to transcriptional regulation of selected genes by chromatin remodeling. Component of a NuA4 histone acetyltransferase complex which is involved in transcriptional activation of selected genes principally by acetylation of nucleosomal histones H4 and H2A. This is Transcription initiation factor TFIID subunit 14b from Arabidopsis thaliana (Mouse-ear cress).